The chain runs to 238 residues: Ribonuclease PH (238 aa).

Phosphate is bound by residues R86 and 124 to 126 (GTR).

Belongs to the RNase PH family. Homohexameric ring arranged as a trimer of dimers.

It catalyses the reaction tRNA(n+1) + phosphate = tRNA(n) + a ribonucleoside 5'-diphosphate. Functionally, phosphorolytic 3'-5' exoribonuclease that plays an important role in tRNA 3'-end maturation. Removes nucleotide residues following the 3'-CCA terminus of tRNAs; can also add nucleotides to the ends of RNA molecules by using nucleoside diphosphates as substrates, but this may not be physiologically important. Probably plays a role in initiation of 16S rRNA degradation (leading to ribosome degradation) during starvation. The chain is Ribonuclease PH from Rhizobium rhizogenes (strain K84 / ATCC BAA-868) (Agrobacterium radiobacter).